Here is a 116-residue protein sequence, read N- to C-terminus: Phosphoribosyl-AMP cyclohydrolase (116 aa).

Position 78 (D78) interacts with Mg(2+). Residue C79 coordinates Zn(2+). Mg(2+) is bound by residues D80 and D82. The Zn(2+) site is built by C95 and C102.

The protein belongs to the PRA-CH family. In terms of assembly, homodimer. It depends on Mg(2+) as a cofactor. Zn(2+) is required as a cofactor.

The protein resides in the cytoplasm. It carries out the reaction 1-(5-phospho-beta-D-ribosyl)-5'-AMP + H2O = 1-(5-phospho-beta-D-ribosyl)-5-[(5-phospho-beta-D-ribosylamino)methylideneamino]imidazole-4-carboxamide. It participates in amino-acid biosynthesis; L-histidine biosynthesis; L-histidine from 5-phospho-alpha-D-ribose 1-diphosphate: step 3/9. Catalyzes the hydrolysis of the adenine ring of phosphoribosyl-AMP. The protein is Phosphoribosyl-AMP cyclohydrolase of Acidiphilium cryptum (strain JF-5).